The sequence spans 158 residues: Crossover junction endodeoxyribonuclease RuvC (158 aa).

Residues Asp-7, Glu-67, and Asp-140 contribute to the active site. 3 residues coordinate Mg(2+): Asp-7, Glu-67, and Asp-140.

This sequence belongs to the RuvC family. As to quaternary structure, homodimer which binds Holliday junction (HJ) DNA. The HJ becomes 2-fold symmetrical on binding to RuvC with unstacked arms; it has a different conformation from HJ DNA in complex with RuvA. In the full resolvosome a probable DNA-RuvA(4)-RuvB(12)-RuvC(2) complex forms which resolves the HJ. Mg(2+) serves as cofactor.

It localises to the cytoplasm. The catalysed reaction is Endonucleolytic cleavage at a junction such as a reciprocal single-stranded crossover between two homologous DNA duplexes (Holliday junction).. The RuvA-RuvB-RuvC complex processes Holliday junction (HJ) DNA during genetic recombination and DNA repair. Endonuclease that resolves HJ intermediates. Cleaves cruciform DNA by making single-stranded nicks across the HJ at symmetrical positions within the homologous arms, yielding a 5'-phosphate and a 3'-hydroxyl group; requires a central core of homology in the junction. The consensus cleavage sequence is 5'-(A/T)TT(C/G)-3'. Cleavage occurs on the 3'-side of the TT dinucleotide at the point of strand exchange. HJ branch migration catalyzed by RuvA-RuvB allows RuvC to scan DNA until it finds its consensus sequence, where it cleaves and resolves the cruciform DNA. The polypeptide is Crossover junction endodeoxyribonuclease RuvC (Dictyoglomus turgidum (strain DSM 6724 / Z-1310)).